A 104-amino-acid polypeptide reads, in one-letter code: Small ribosomal subunit protein uS10 (104 aa).

This sequence belongs to the universal ribosomal protein uS10 family. In terms of assembly, part of the 30S ribosomal subunit.

Involved in the binding of tRNA to the ribosomes. This chain is Small ribosomal subunit protein uS10, found in Gloeobacter violaceus (strain ATCC 29082 / PCC 7421).